Reading from the N-terminus, the 353-residue chain is MTVRDWANRGQTYVNARAPNLLGRFRSTDDEDENNPSTELATDTTSAYGSTAASVVTMANSKPDDVSLYATSSHHHEYFTGSAWIHPVYTKEQMDALEVNHRKTETFSDRVALRAILLMRIIFDLCTGYKHPKEGEAHLPKFRMTTRQWLDRFLFLESIAGVPGMVAGMIRHLHSLRALRRDRAWIESLVEEAYNERMHLLTFLKLQKPSVQMRTGLLIGQIIFYNLFFISYLISPATCHRFVGYLEEEAVITYTRCLEDIDAGRLPELASMEVPDIARTYWHMEDDCTMRDLIQYVRADEAKHCEVNHTFGNLHQTSDRNPFALVIDNGRPQPSKDLTTFRSVGWRRDEIAN.

Residues 25 to 45 (FRSTDDEDENNPSTELATDTT) form a disordered region. Residues 35 to 45 (NPSTELATDTT) show a composition bias toward polar residues. A helical transmembrane segment spans residues 153 to 173 (FLFLESIAGVPGMVAGMIRHL). Fe cation is bound by residues E157, E196, and H199. A helical membrane pass occupies residues 217-237 (LLIGQIIFYNLFFISYLISPA). Fe cation is bound by residues E247, E301, and H304.

This sequence belongs to the alternative oxidase family. Fe cation is required as a cofactor.

The protein localises to the mitochondrion inner membrane. Its function is as follows. Catalyzes cyanide-resistant oxygen consumption. May increase respiration when the cytochrome respiratory pathway is restricted, or in response to low temperatures. The protein is Alternative oxidase, mitochondrial (AOX) of Yarrowia lipolytica (strain CLIB 122 / E 150) (Yeast).